Here is a 205-residue protein sequence, read N- to C-terminus: MKILITGFEPFGGEVVNPSFEAVKHLPDSIEKAQIVKAAIHTVFRKSIEVLEELIVKEKPDIVICVGQAGGRAEITIERVAINIDDAKNPDNEGNTPKDEVIFEDGENAYFSNLPIKKMVEEIKNCKIPASISNSAGTYVCNHLMYGLLYLINKKYKNMKGGFIHVPYLPQQVLNKKNVPSMSLDNIVQALVCSIKAILKEYNDE.

Residues Glu78, Cys141, and His165 contribute to the active site.

The protein belongs to the peptidase C15 family. As to quaternary structure, homotetramer.

It is found in the cytoplasm. The enzyme catalyses Release of an N-terminal pyroglutamyl group from a polypeptide, the second amino acid generally not being Pro.. Its function is as follows. Removes 5-oxoproline from various penultimate amino acid residues except L-proline. This Thermosipho africanus (strain TCF52B) protein is Pyrrolidone-carboxylate peptidase.